Consider the following 201-residue polypeptide: Holliday junction branch migration complex subunit RuvA (201 aa).

A domain I region spans residues 1 to 64; sequence MYEYIRGQFQ…EDFIGLYGFT (64 aa). Residues 65 to 143 form a domain II region; the sequence is TREELEMFKL…PDELTSEEGQ (79 aa). Positions 144–152 are flexible linker; the sequence is LIEGINDNS. Residues 153 to 201 form a domain III region; the sequence is DYSFNINETLSALMALGYTEKEAQKALEKVDKTLSIENMIKESLKLLMR.

It belongs to the RuvA family. As to quaternary structure, homotetramer. Forms an RuvA(8)-RuvB(12)-Holliday junction (HJ) complex. HJ DNA is sandwiched between 2 RuvA tetramers; dsDNA enters through RuvA and exits via RuvB. An RuvB hexamer assembles on each DNA strand where it exits the tetramer. Each RuvB hexamer is contacted by two RuvA subunits (via domain III) on 2 adjacent RuvB subunits; this complex drives branch migration. In the full resolvosome a probable DNA-RuvA(4)-RuvB(12)-RuvC(2) complex forms which resolves the HJ.

It is found in the cytoplasm. Functionally, the RuvA-RuvB-RuvC complex processes Holliday junction (HJ) DNA during genetic recombination and DNA repair, while the RuvA-RuvB complex plays an important role in the rescue of blocked DNA replication forks via replication fork reversal (RFR). RuvA specifically binds to HJ cruciform DNA, conferring on it an open structure. The RuvB hexamer acts as an ATP-dependent pump, pulling dsDNA into and through the RuvAB complex. HJ branch migration allows RuvC to scan DNA until it finds its consensus sequence, where it cleaves and resolves the cruciform DNA. This is Holliday junction branch migration complex subunit RuvA from Clostridium perfringens (strain 13 / Type A).